Here is a 344-residue protein sequence, read N- to C-terminus: Small ribosomal subunit protein mS38 (344 aa).

3 disordered regions span residues 1 to 27 (MIPQSVRRVVAAAPQSPVVSSLAASSA), 43 to 101 (ALQK…SVPS), and 325 to 344 (KKYKKLMRRTRNERRKQDRL). Positions 51-74 (SSKPSSPDDGSSRAFAARASVPAA) are enriched in low complexity. Residues 325 to 338 (KKYKKLMRRTRNER) show a composition bias toward basic residues.

This sequence belongs to the mitochondrion-specific ribosomal protein mS38 family. As to quaternary structure, component of the mitochondrial small ribosomal subunit (mt-SSU). Mature N.crassa 74S mitochondrial ribosomes consist of a small (37S) and a large (54S) subunit. The 37S small subunit contains a 16S ribosomal RNA (16S mt-rRNA) and 32 different proteins. The 54S large subunit contains a 23S rRNA (23S mt-rRNA) and 42 different proteins.

The protein localises to the mitochondrion. Its function is as follows. Component of the mitochondrial ribosome (mitoribosome), a dedicated translation machinery responsible for the synthesis of mitochondrial genome-encoded proteins, including at least some of the essential transmembrane subunits of the mitochondrial respiratory chain. The mitoribosomes are attached to the mitochondrial inner membrane and translation products are cotranslationally integrated into the membrane. This Neurospora crassa (strain ATCC 24698 / 74-OR23-1A / CBS 708.71 / DSM 1257 / FGSC 987) protein is Small ribosomal subunit protein mS38 (cox24).